Here is a 210-residue protein sequence, read N- to C-terminus: Probable HTH-type transcriptional regulator ArpR (210 aa).

The HTH tetR-type domain maps to 10-70 (QETRAQIIEA…ALLDSLHETH (61 aa)). Positions 33–52 (TLADIAELAGVTRGAIYWHF) form a DNA-binding region, H-T-H motif.

Its function is as follows. Probable regulatory protein for the antibiotic efflux pump arpABC operon. May function as a repressor. In Pseudomonas putida (Arthrobacter siderocapsulatus), this protein is Probable HTH-type transcriptional regulator ArpR (arpR).